Consider the following 107-residue polypeptide: MNNNIHFVDIGFSNYVDAGKILTVNRPDSSPIKRSLQHAKEAGRFLDLTQGKKTRSIITQSSNTGLIFTASAVQTSTIMNRIRETEVKQSKRMAGKLIEKSVEVGNQ.

Belongs to the RemA family.

The sequence is that of Putative regulatory protein BCG9842_A0044 from Bacillus cereus (strain G9842).